The sequence spans 505 residues: Deoxyguanosinetriphosphate triphosphohydrolase (505 aa).

Positions 66 to 273 (RLTHSMEVQQ…MEAADDISYC (208 aa)) constitute an HD domain.

This sequence belongs to the dGTPase family. Type 1 subfamily. Homotetramer. The cofactor is Mg(2+).

The enzyme catalyses dGTP + H2O = 2'-deoxyguanosine + triphosphate + H(+). Its function is as follows. dGTPase preferentially hydrolyzes dGTP over the other canonical NTPs. The polypeptide is Deoxyguanosinetriphosphate triphosphohydrolase (Escherichia coli O139:H28 (strain E24377A / ETEC)).